Reading from the N-terminus, the 382-residue chain is 2-heptyl-3-hydroxy-4(1H)-quinolone synthase (382 aa).

It belongs to the 3-hydroxybenzoate 6-hydroxylase family.

It carries out the reaction 2-heptyl-4(1H)-quinolone + NADH + O2 + H(+) = 2-heptyl-3-hydroxy-4(1H)-quinolone + NAD(+) + H2O. Involved in the terminal step of the biosynthesis of quinolone which in addition to serve as a potent signal for quorum sensing, chelates iron and promotes the formation of membrane vesicles (MVs). Catalyzes the hydroxylation of 2-heptyl-4-quinolone (C7-HHQ) to yield 2-heptyl-3-hydroxy-4-quinolone (PQS). This Pseudomonas aeruginosa (strain ATCC 15692 / DSM 22644 / CIP 104116 / JCM 14847 / LMG 12228 / 1C / PRS 101 / PAO1) protein is 2-heptyl-3-hydroxy-4(1H)-quinolone synthase (pqsH).